A 610-amino-acid polypeptide reads, in one-letter code: MSEIFDAKAFLKTVTSQPGVYRMYDAGGTVIYVGKAKDLKKRLSSYFRSNLASRKTEALVAQIQHIDVTVTHTETEALLLEHNYIKLYQPRYNVLLRDDKSYPFIFLSGDTHPRLAMHRGAKHAKGEYFGPFPNGYAVRETLALLQKIFPIRQCENSVYRNRSRPCLQYQIGRCLGPCVAGLVSEEEYTQQVEYVRLFLSGKDDQVLTQLIARMEKASQDLAFEEAARIRDQIQAVRRVTERQFVSNAGDDLDVIGVAFDAGMACVHVLFIRQGKVLGSRSYFPKVPGGTELGEVVETFVGQFYLQGSQMRTLPGEILLDFNLSDKTLLADSLSELAGRRIHVQTKPRGDRARYLKLARTNAATALITKLSQQSTITQRLTALAAVLKLPAIKRMECFDISHTMGEQTVASCVVFDANGPLRAEYRRYNIAGITPGDDYAAMNQVLRRRYGKAIEESKIPDVILIDGGKGQLAQAKAVFAELDVPWDKHRPLLLGVAKGADRKAGLETLFFEPEGEGFSLPPDSPALHVIQHIRDESHDHAIGGHRKKRAKVKNTSTLETIEGVGPKRRQMLLKYMGGLQGLRNASVEEIAKVPGISQGLAEKIFWSLKH.

In terms of domain architecture, GIY-YIG spans 16-94; it reads SQPGVYRMYD…IKLYQPRYNV (79 aa). Residues 204 to 239 enclose the UVR domain; it reads DQVLTQLIARMEKASQDLAFEEAARIRDQIQAVRRV.

It belongs to the UvrC family. Interacts with UvrB in an incision complex.

It localises to the cytoplasm. The UvrABC repair system catalyzes the recognition and processing of DNA lesions. UvrC both incises the 5' and 3' sides of the lesion. The N-terminal half is responsible for the 3' incision and the C-terminal half is responsible for the 5' incision. This is UvrABC system protein C from Salmonella schwarzengrund (strain CVM19633).